A 413-amino-acid chain; its full sequence is RNA-binding protein 41 (413 aa).

The interval 225 to 247 (SGSGTAEKPSLLQDKGKQAAQGK) is disordered. One can recognise an RRM domain in the interval 309 to 387 (KVLYLKNLSP…KILVIEFAKS (79 aa)).

Its function is as follows. May bind RNA. The polypeptide is RNA-binding protein 41 (Rbm41) (Mus musculus (Mouse)).